A 221-amino-acid polypeptide reads, in one-letter code: Endo-1,4-beta-xylanase 1 (221 aa).

The signal sequence occupies residues 1–22 (MKFFATIAALVVAAVAAPVAEA). Residues 29–221 (PMLIERAGPG…GTGSASVTVS (193 aa)) form the GH11 domain. The active-site Nucleophile is E114. E208 acts as the Proton donor in catalysis.

This sequence belongs to the glycosyl hydrolase 11 (cellulase G) family.

The protein resides in the secreted. The enzyme catalyses Endohydrolysis of (1-&gt;4)-beta-D-xylosidic linkages in xylans.. Its pathway is glycan degradation; xylan degradation. In terms of biological role, endo-1,4-beta-xylanase involved in the hydrolysis of xylan, a major structural heterogeneous polysaccharide found in plant biomass representing the second most abundant polysaccharide in the biosphere, after cellulose. Hydrolyzes xylans from oat spelt and birchwood at similar rates, but it has no detectable activity toward Avicel or carboxymethyl cellulose. The polypeptide is Endo-1,4-beta-xylanase 1 (xynI) (Aureobasidium pullulans (Black yeast)).